The sequence spans 349 residues: MIEFDNLTYLHGKPQGTGLLKANPEDFVVVEDLGFEPDGEGEHILVRILKNGCNTRFVADALAKFLKIHAHEVSFAGQKDKHAVTEQWLCARVPGKEMPDLSAFQLEGCQVLEYARHKRKLRLGALKGNAFTLVLREVSNRDDVEQRLIDICVKGVPNYFGAQRFGIGGSNLQGALRWAQTNTPVRDRNKRSFWLSAARSALFNQIVAERLKKADVNQVVDGDALQLAGRGSWFVATTEELAELQHRVNDKELMITAALPGSGEWGTQREALAFEQAAVAAETELQALLVREKVEAARRAMLLYPQQLSWNWWDDVTVEIRFWLPAGSFATSVVRELINTTGDYAHIAE.

Residue Phe-27 participates in substrate binding. Catalysis depends on Asp-80, which acts as the Nucleophile. Residue Asn-129 coordinates substrate. The TRUD domain maps to 155–303 (GVPNYFGAQR…VEAARRAMLL (149 aa)). Residue Phe-329 participates in substrate binding.

The protein belongs to the pseudouridine synthase TruD family.

The catalysed reaction is uridine(13) in tRNA = pseudouridine(13) in tRNA. Functionally, responsible for synthesis of pseudouridine from uracil-13 in transfer RNAs. The chain is tRNA pseudouridine synthase D from Shigella boydii serotype 18 (strain CDC 3083-94 / BS512).